A 564-amino-acid polypeptide reads, in one-letter code: Dihydroxy-acid dehydratase (564 aa).

D80 lines the Mg(2+) pocket. C121 contacts [2Fe-2S] cluster. 2 residues coordinate Mg(2+): D122 and K123. K123 carries the post-translational modification N6-carboxylysine. Position 194 (C194) interacts with [2Fe-2S] cluster. Position 447 (E447) interacts with Mg(2+). The Proton acceptor role is filled by S473.

The protein belongs to the IlvD/Edd family. Homodimer. Requires [2Fe-2S] cluster as cofactor. Mg(2+) is required as a cofactor.

It catalyses the reaction (2R)-2,3-dihydroxy-3-methylbutanoate = 3-methyl-2-oxobutanoate + H2O. It carries out the reaction (2R,3R)-2,3-dihydroxy-3-methylpentanoate = (S)-3-methyl-2-oxopentanoate + H2O. It functions in the pathway amino-acid biosynthesis; L-isoleucine biosynthesis; L-isoleucine from 2-oxobutanoate: step 3/4. Its pathway is amino-acid biosynthesis; L-valine biosynthesis; L-valine from pyruvate: step 3/4. Functionally, functions in the biosynthesis of branched-chain amino acids. Catalyzes the dehydration of (2R,3R)-2,3-dihydroxy-3-methylpentanoate (2,3-dihydroxy-3-methylvalerate) into 2-oxo-3-methylpentanoate (2-oxo-3-methylvalerate) and of (2R)-2,3-dihydroxy-3-methylbutanoate (2,3-dihydroxyisovalerate) into 2-oxo-3-methylbutanoate (2-oxoisovalerate), the penultimate precursor to L-isoleucine and L-valine, respectively. The sequence is that of Dihydroxy-acid dehydratase from Listeria monocytogenes serotype 4b (strain CLIP80459).